We begin with the raw amino-acid sequence, 568 residues long: Phosphoprotein (568 aa).

Disordered stretches follow at residues 1–22 (MDQD…PGGR) and 40–320 (PTDI…GIGE). The segment covering 7-20 (ILKEDSEVERKAPG) has biased composition (basic and acidic residues). The N0 binding stretch occupies residues 33–41 (DAVLSSEPT). The span at 50-60 (LHNTINTSQGP) shows a compositional bias: polar residues. At Ser-68 the chain carries Phosphoserine; by host. Over residues 83–101 (RSGEESRVSGRTSKPEAEA) the composition is skewed to basic and acidic residues. The residue at position 125 (Ser-125) is a Phosphoserine; by host. Residues 150–168 (GIEDENREMAAHPDKRGED) are compositionally biased toward basic and acidic residues. Polar residues predominate over residues 191–206 (ASNNGRSMEPGSSHSA). 3 positions are modified to phosphoserine; by host: Ser-192, Ser-249, and Ser-257. The multimerization stretch occupies residues 344–411 (FESSRDASYV…SFRDIYKRFS (68 aa)). The stretch at 364-429 (YAEMTFNVCG…LLMSNLSTLH (66 aa)) forms a coiled coil. Residues 412–445 (EYQKEQNSLLMSNLSTLHIITDRGGKTDNTDSLT) are l protein binding. Ser-447 and Ser-449 each carry phosphoserine; by host. The interaction with the nucleocapsid (N-RNA) stretch occupies residues 479 to 568 (DLIREDEFRD…VEEDIESLTN (90 aa)).

The protein belongs to the respirovirus P protein family. In terms of assembly, homotetramer. Interacts (via multimerization domain) with polymerase L; this interaction forms the polymerase complex. Interacts (via N-terminus) with N0; this interaction allows P to chaperon N0 before encapsidation and form the N-P complex. Interacts (via C-terminus) with N-RNA template; this interaction positions the polymerase on the template. Phosphorylated by PKC/PRKCZ, and other unknown kinases. Phosphorylation is necessary for viral transcription and replication. The N-terminus contains the majority of phosphorylated sites. Ser-249 is the major site of phosphorylation, but is not necessary for most functions.

Its subcellular location is the host cytoplasm. Essential cofactor of the RNA polymerase L that plays a central role in the transcription and replication by forming the polymerase complex with RNA polymerase L and recruiting L to the genomic N-RNA template for RNA synthesis. Also plays a central role in the encapsidation of nascent RNA chains by forming the encapsidation complex with the nucleocapsid protein N (N-P complex). Acts as a chaperone for newly synthesized free N protein, so-called N0, allowing encapsidation of nascent RNA chains during replication. The nucleoprotein protein N prevents excessive phosphorylation of P, which leads to down-regulation of viral transcription/ replication. Participates, together with N, in the formation of viral factories (viroplasms), which are large inclusions in the host cytoplasm where replication takes place. Recruits host PI4KB and remodel the host endoplasmic reticulum membrane to form viral replication factories. This Sendai virus (strain 6/94) (SeV) protein is Phosphoprotein (P/V/C).